The primary structure comprises 387 residues: Queuine tRNA-ribosyltransferase (387 aa).

Catalysis depends on Asp102, which acts as the Proton acceptor. Substrate contacts are provided by residues 102–106 (DSGGF), Asp156, Gln205, and Gly232. The tract at residues 263-269 (GVGTPED) is RNA binding. Asp282 (nucleophile) is an active-site residue. The RNA binding; important for wobble base 34 recognition stretch occupies residues 287-291 (TRNAR). Zn(2+) contacts are provided by Cys320, Cys322, Cys325, and His351.

Belongs to the queuine tRNA-ribosyltransferase family. Homodimer. Within each dimer, one monomer is responsible for RNA recognition and catalysis, while the other monomer binds to the replacement base PreQ1. Zn(2+) is required as a cofactor.

The enzyme catalyses 7-aminomethyl-7-carbaguanine + guanosine(34) in tRNA = 7-aminomethyl-7-carbaguanosine(34) in tRNA + guanine. It participates in tRNA modification; tRNA-queuosine biosynthesis. In terms of biological role, catalyzes the base-exchange of a guanine (G) residue with the queuine precursor 7-aminomethyl-7-deazaguanine (PreQ1) at position 34 (anticodon wobble position) in tRNAs with GU(N) anticodons (tRNA-Asp, -Asn, -His and -Tyr). Catalysis occurs through a double-displacement mechanism. The nucleophile active site attacks the C1' of nucleotide 34 to detach the guanine base from the RNA, forming a covalent enzyme-RNA intermediate. The proton acceptor active site deprotonates the incoming PreQ1, allowing a nucleophilic attack on the C1' of the ribose to form the product. After dissociation, two additional enzymatic reactions on the tRNA convert PreQ1 to queuine (Q), resulting in the hypermodified nucleoside queuosine (7-(((4,5-cis-dihydroxy-2-cyclopenten-1-yl)amino)methyl)-7-deazaguanosine). This is Queuine tRNA-ribosyltransferase from Polaromonas naphthalenivorans (strain CJ2).